A 212-amino-acid polypeptide reads, in one-letter code: Ras-related protein Rab-2A (212 aa).

Residue Ala-2 is modified to N-acetylalanine. The tract at residues 2–19 is required for interaction with PRKCI; it reads AYAYLFKYIIIGDTGVGK. Residues Gly-16, Val-17, Gly-18, Lys-19, Ser-20, Cys-21, and Thr-38 each coordinate GTP. Mg(2+) is bound at residue Ser-20. The short motif at 37-42 is the Switch 1 element; sequence LTIGVE. The Mg(2+) site is built by Thr-38 and Asp-61. The short motif at 63–72 is the Switch 2 element; sequence AGQESFRSIT. Residues Gly-64, Asn-119, Lys-120, Asp-122, Ala-150, and Lys-151 each coordinate GTP. S-geranylgeranyl cysteine attachment occurs at residues Cys-211 and Cys-212.

This sequence belongs to the small GTPase superfamily. Rab family. Interacts with PRKCI. Interacts with TRIP11. Interacts (in GTP-bound form) with GARIN1B. Interacts (GTP-bound) with HOPS complex component VPS39; interaction contributes to obtaining a functional HOPS complex that promotes autophagosome-lysosome membrane fusion driven by STX17-SNAP29-VAMP8. May interact with VPS41. Mg(2+) is required as a cofactor. In terms of processing, prenylated. Prenylation is required for association with cellular membranes. As to expression, brain and parietal cells.

It localises to the endoplasmic reticulum-Golgi intermediate compartment membrane. The protein localises to the melanosome. It is found in the endoplasmic reticulum membrane. Its subcellular location is the golgi apparatus membrane. The protein resides in the cytoplasmic vesicle. It localises to the secretory vesicle. The protein localises to the acrosome. It is found in the autophagosome membrane. The catalysed reaction is GTP + H2O = GDP + phosphate + H(+). Regulated by guanine nucleotide exchange factors (GEFs) which promote the exchange of bound GDP for free GTP, GTPase activating proteins (GAPs) which increase the GTP hydrolysis activity, and GDP dissociation inhibitors (GDIs) which inhibit the dissociation of the nucleotide from the GTPase. In terms of biological role, the small GTPases Rab are key regulators of intracellular membrane trafficking, from the formation of transport vesicles to their fusion with membranes. Rabs cycle between active GTP-bound and inactive GDP-bound states. In their active state, drive transport of vesicular carriers from donor organelles to acceptor organelles to regulate the membrane traffic that maintains organelle identity and morphology. RAB2A regulates autophagy by promoting autophagosome-lysosome fusion via recruitment of the HOPS endosomal tethering complex; this process involves autophagosomal RAB2A and lysosomal RAB39A recruitment of HOPS subcomplexes VPS39-VPS11 and VPS41-VPS16-VPS18-VPS33A, respectively, which assemble into a functional complex to mediate membrane tethering and SNAREs-driven membrane fusion. Required for protein transport from the endoplasmic reticulum to the Golgi complex. Regulates the compacted morphology of the Golgi. Together with RAB2B, redundantly required for efficient autophagic flux. This chain is Ras-related protein Rab-2A (RAB2A), found in Oryctolagus cuniculus (Rabbit).